The chain runs to 496 residues: NADP-dependent glyceraldehyde-3-phosphate dehydrogenase (496 aa).

Residues arginine 116 and 169-170 (NY) each bind substrate. NADP(+) is bound by residues lysine 192, threonine 195, and aspartate 230. 245 to 249 (GGDTG) is an NAD(+) binding site. The active-site Proton acceptor is the glutamate 264. Position 297-299 (297-299 (RCT)) interacts with substrate. The active-site Nucleophile is cysteine 298. Glutamate 391 provides a ligand contact to NADP(+). Arginine 451 contacts substrate.

Belongs to the aldehyde dehydrogenase family.

Its subcellular location is the cytoplasm. The enzyme catalyses D-glyceraldehyde 3-phosphate + NADP(+) + H2O = (2R)-3-phosphoglycerate + NADPH + 2 H(+). Functionally, important as a means of generating NADPH for biosynthetic reactions. This is NADP-dependent glyceraldehyde-3-phosphate dehydrogenase (GAPN) from Nicotiana plumbaginifolia (Leadwort-leaved tobacco).